Here is a 905-residue protein sequence, read N- to C-terminus: A disintegrin and metalloproteinase with thrombospondin motifs 8 (905 aa).

An N-terminal signal peptide occupies residues Met1 to Gly28. The propeptide occupies Ala29–Arg228. Disordered stretches follow at residues Pro139–Asp163 and Asn186–Arg225. A compositionally biased stretch (basic and acidic residues) spans Glu191–Lys215. In terms of domain architecture, Peptidase M12B spans Arg234–Pro444. Disulfide bonds link Cys309–Cys362, Cys338–Cys344, Cys356–Cys439, Cys394–Cys423, Cys478–Cys502, Cys487–Cys523, Cys517–Cys528, Cys554–Cys591, Cys558–Cys596, and Cys569–Cys581. His378 is a Zn(2+) binding site. The active site involves Glu379. Positions 382 and 388 each coordinate Zn(2+). N-linked (GlcNAc...) asparagine glycosylation is found at Asn415, Asn480, and Asn506. In terms of domain architecture, Disintegrin spans Gly453–Val541. A TSP type-1 1 domain is found at Asp542–Pro597. Asn615 carries N-linked (GlcNAc...) asparagine glycosylation. The interval Arg706–Leu847 is spacer. The TSP type-1 2 domain occupies Pro848–Pro904. The tract at residues Asp877–Leu905 is disordered.

Requires Zn(2+) as cofactor. The precursor is cleaved by a furin endopeptidase. Post-translationally, glycosylated. Can be O-fucosylated by POFUT2 on a serine or a threonine residue found within the consensus sequence C1-X(2)-(S/T)-C2-G of the TSP type-1 repeat domains where C1 and C2 are the first and second cysteine residue of the repeat, respectively. Fucosylated repeats can then be further glycosylated by the addition of a beta-1,3-glucose residue by the glucosyltransferase, B3GALTL. Fucosylation mediates the efficient secretion of ADAMTS family members. Can also be C-glycosylated with one or two mannose molecules on tryptophan residues within the consensus sequence W-X-X-W of the TPRs, and N-glycosylated. These other glycosylations can also facilitate secretion. In terms of tissue distribution, expressed specifically in adult lung and heart and low expression during mouse development.

It localises to the secreted. Its subcellular location is the extracellular space. It is found in the extracellular matrix. Its function is as follows. Has anti-angiogenic properties. This chain is A disintegrin and metalloproteinase with thrombospondin motifs 8 (Adamts8), found in Mus musculus (Mouse).